We begin with the raw amino-acid sequence, 161 residues long: Cytochrome c-type biogenesis protein CcmE (161 aa).

At 1 to 8 (MNPRRKKR) the chain is on the cytoplasmic side. Residues 9 to 29 (LTLAVALIAGVAAVASLLLYA) form a helical; Signal-anchor for type II membrane protein membrane-spanning segment. Topologically, residues 30–161 (LNSNLNLFYT…TYNQKALEDK (132 aa)) are periplasmic. The heme site is built by His131 and Tyr135. A disordered region spans residues 142-161 (EAMGQTHEKPTYNQKALEDK). Residues 147–161 (THEKPTYNQKALEDK) are compositionally biased toward basic and acidic residues.

It belongs to the CcmE/CycJ family.

It is found in the cell inner membrane. Heme chaperone required for the biogenesis of c-type cytochromes. Transiently binds heme delivered by CcmC and transfers the heme to apo-cytochromes in a process facilitated by CcmF and CcmH. This chain is Cytochrome c-type biogenesis protein CcmE, found in Shewanella frigidimarina (strain NCIMB 400).